A 361-amino-acid chain; its full sequence is RLA class I histocompatibility antigen, alpha chain 11/11 (361 aa).

The first 24 residues, 1 to 24 (MGSMAPRTLLLLLAGALTLKDTQA), serve as a signal peptide directing secretion. The segment at 25-114 (GSHSMRYFYT…ALRYYNQSAA (90 aa)) is alpha-1. Over 25-308 (GSHSMRYFYT…EPPAQPTALI (284 aa)) the chain is Extracellular. Asparagine 110 carries an N-linked (GlcNAc...) asparagine glycan. Positions 115–206 (GSHTFQTMFG…EMGKETLQRA (92 aa)) are alpha-2. 2 cysteine pairs are disulfide-bonded: cysteine 125/cysteine 188 and cysteine 227/cysteine 283. The alpha-3 stretch occupies residues 207–298 (DPPKAHVTHH…GLPEPLTLTW (92 aa)). Residues 209–297 (PKAHVTHHPA…EGLPEPLTLT (89 aa)) form the Ig-like C1-type domain. Residues 299–308 (EPPAQPTALI) are connecting peptide. A helical membrane pass occupies residues 309–329 (VGIVAGVLGVLLILGAVVAVV). Over 330–361 (RRKKHSSDGKGGRYTPAAGGHRDQGSDDSLMP) the chain is Cytoplasmic. Residues 335–361 (SSDGKGGRYTPAAGGHRDQGSDDSLMP) are disordered. A phosphoserine mark is found at serine 355 and serine 358.

Belongs to the MHC class I family. In terms of assembly, heterodimer of an alpha chain and a beta chain (beta-2-microglobulin).

Its subcellular location is the membrane. Functionally, involved in the presentation of foreign antigens to the immune system. The chain is RLA class I histocompatibility antigen, alpha chain 11/11 from Oryctolagus cuniculus (Rabbit).